A 409-amino-acid polypeptide reads, in one-letter code: Argininosuccinate synthase (409 aa).

Residues 10 to 18 (AYSGGLDTS) and Ala37 each bind ATP. The L-citrulline site is built by Tyr90 and Ser95. An ATP-binding site is contributed by Gly120. Residues Thr122, Asn126, and Asp127 each contribute to the L-aspartate site. Position 126 (Asn126) interacts with L-citrulline. Arg130, Ser182, Ser191, Glu267, and Tyr279 together coordinate L-citrulline.

Belongs to the argininosuccinate synthase family. Type 1 subfamily. As to quaternary structure, homotetramer.

It is found in the cytoplasm. The catalysed reaction is L-citrulline + L-aspartate + ATP = 2-(N(omega)-L-arginino)succinate + AMP + diphosphate + H(+). It functions in the pathway amino-acid biosynthesis; L-arginine biosynthesis; L-arginine from L-ornithine and carbamoyl phosphate: step 2/3. The polypeptide is Argininosuccinate synthase (Thiobacillus denitrificans (strain ATCC 25259 / T1)).